The chain runs to 345 residues: D(2) dopamine receptor B (345 aa).

Topologically, residues 1–10 (EWRFSRIHCD) are extracellular. C9 and C84 are oxidised to a cystine. Residues 11 to 32 (IFVTLDVMMCTASILNLCAISI) form a helical membrane-spanning segment. Residues 33 to 53 (DRYTAVAMPMLYNTRYSSKRR) lie on the Cytoplasmic side of the membrane. The chain crosses the membrane as a helical span at residues 54-74 (VTVMISVVWVLSFAISCPLLF). Topologically, residues 75–90 (GLNNTASTVCIIDNPA) are extracellular. N77 carries N-linked (GlcNAc...) asparagine glycosylation. Residues 91-115 (FVIYSSIVSFYVPFIVTLLVYVQIY) form a helical membrane-spanning segment. Topologically, residues 116–275 (IVLRKRRKRV…SQHKEKKATQ (160 aa)) are cytoplasmic. Residues 166 to 177 (KKKVEAGNHPED) show a composition bias toward basic and acidic residues. Residues 166 to 199 (KKKVEAGNHPEDMEMEMMSSTSPPEKTKHKSASP) form a disordered region. Residues 276–297 (MLAIVLGVFIICWLPFFITHIL) traverse the membrane as a helical segment. At 298-311 (NMHCNCNIPQALYS) the chain is on the extracellular side. The cysteines at positions 301 and 303 are disulfide-linked. Residues 312–333 (AFTWLGYVNSAVNPIIYTTFNV) form a helical membrane-spanning segment. The Cytoplasmic portion of the chain corresponds to 334–345 (EFRKAFIKILHC). C345 is lipidated: S-palmitoyl cysteine.

Belongs to the G-protein coupled receptor 1 family. Post-translationally, palmitoylated. Palmitoylation is probably required for proper localization to the plasma membrane and stability of the receptor. Brain; pituitary.

It localises to the cell membrane. The protein resides in the golgi apparatus membrane. Functionally, this is one of the five types (D1 to D5) of receptors for dopamine. The activity of this receptor is mediated by G proteins which inhibits adenylyl cyclase. In Xenopus D2R is involved in the regulation of the melanotrope cells of the intermediate pituitary during background adaptation of the animal. This is D(2) dopamine receptor B (drd2-b) from Xenopus laevis (African clawed frog).